Reading from the N-terminus, the 198-residue chain is Small ribosomal subunit protein uS4c (198 aa).

Residues 85–145 (LRLDATIFRL…PKKFTIILIC (61 aa)) form the S4 RNA-binding domain.

The protein belongs to the universal ribosomal protein uS4 family. As to quaternary structure, part of the 30S ribosomal subunit.

The protein localises to the plastid. It localises to the apicoplast. In terms of biological role, one of the primary rRNA binding proteins, it binds directly to 16S rRNA where it nucleates assembly of the body of the 30S subunit. This Toxoplasma gondii protein is Small ribosomal subunit protein uS4c (rps4).